Here is a 377-residue protein sequence, read N- to C-terminus: Chaperone protein DnaJ (377 aa).

The 66-residue stretch at 5 to 70 (DYYEVLGVGR…NKKAAYDQFG (66 aa)) folds into the J domain. The segment at 133–211 (GLTKELRIPT…CHGDGRVEKT (79 aa)) adopts a CR-type zinc-finger fold. The Zn(2+) site is built by C146, C149, C163, C166, C185, C188, C199, and C202. CXXCXGXG motif repeat units lie at residues 146-153 (CDVCDGSG), 163-170 (CGTCHGQG), 185-192 (CPTCHGRG), and 199-206 (CSKCHGDG).

It belongs to the DnaJ family. Homodimer. It depends on Zn(2+) as a cofactor.

The protein localises to the cytoplasm. Participates actively in the response to hyperosmotic and heat shock by preventing the aggregation of stress-denatured proteins and by disaggregating proteins, also in an autonomous, DnaK-independent fashion. Unfolded proteins bind initially to DnaJ; upon interaction with the DnaJ-bound protein, DnaK hydrolyzes its bound ATP, resulting in the formation of a stable complex. GrpE releases ADP from DnaK; ATP binding to DnaK triggers the release of the substrate protein, thus completing the reaction cycle. Several rounds of ATP-dependent interactions between DnaJ, DnaK and GrpE are required for fully efficient folding. Also involved, together with DnaK and GrpE, in the DNA replication of plasmids through activation of initiation proteins. This is Chaperone protein DnaJ from Shewanella sp. (strain ANA-3).